Here is a 409-residue protein sequence, read N- to C-terminus: Serine/threonine transporter SstT (409 aa).

9 helical membrane passes run 24–44, 48–68, 82–102, 142–162, 194–214, 218–238, 292–312, 319–339, and 365–385; these read LALG…AGLF, FVGA…AATI, IIVL…IAGM, AIAN…GAAL, LGIF…ALAG, LLAV…PAIV, IPLG…VLAM, GIQV…VSAC, and VAMQ…SAET.

It belongs to the dicarboxylate/amino acid:cation symporter (DAACS) (TC 2.A.23) family.

It is found in the cell inner membrane. It carries out the reaction L-serine(in) + Na(+)(in) = L-serine(out) + Na(+)(out). The enzyme catalyses L-threonine(in) + Na(+)(in) = L-threonine(out) + Na(+)(out). In terms of biological role, involved in the import of serine and threonine into the cell, with the concomitant import of sodium (symport system). This chain is Serine/threonine transporter SstT, found in Neisseria meningitidis serogroup C (strain 053442).